The following is a 234-amino-acid chain: Toxic shock syndrome toxin-1 (234 aa).

An N-terminal signal peptide occupies residues 1–40 (MNKKLLMNFFIVSPLLLATTATDFTPVPLSSNQIIKTAKA).

This sequence belongs to the staphylococcal/streptococcal toxin family.

The protein localises to the secreted. In terms of biological role, responsible for the symptoms of toxic shock syndrome. The polypeptide is Toxic shock syndrome toxin-1 (tst) (Staphylococcus aureus).